The chain runs to 143 residues: Adrenodoxin, mitochondrial (143 aa).

The N-terminal 19 residues, 1 to 19 (CSAVAVRTLRPLSLSARAA), are a transit peptide targeting the mitochondrion. Positions 26 to 130 (ITVHFINRDG…NMTVRVPEAV (105 aa)) constitute a 2Fe-2S ferredoxin-type domain. 4 residues coordinate [2Fe-2S] cluster: Cys65, Cys71, Cys74, and Cys111.

This sequence belongs to the adrenodoxin/putidaredoxin family. It depends on [2Fe-2S] cluster as a cofactor.

The protein localises to the mitochondrion matrix. In terms of biological role, essential for the synthesis of various steroid hormones. Participates in the reduction of mitochondrial cytochrome P450 for steroidogenesis. Transfers electrons from adrenodoxin reductase to CYP11A1, a cytochrome P450 that catalyzes cholesterol side-chain cleavage. Does not form a ternary complex with adrenodoxin reductase and CYP11A1 but shuttles between the two enzymes to transfer electrons. This is Adrenodoxin, mitochondrial (FDX1) from Gallus gallus (Chicken).